A 242-amino-acid polypeptide reads, in one-letter code: Large ribosomal subunit protein uL30x (242 aa).

Belongs to the universal ribosomal protein uL30 family.

The polypeptide is Large ribosomal subunit protein uL30x (RPL7C) (Arabidopsis thaliana (Mouse-ear cress)).